Reading from the N-terminus, the 213-residue chain is MPARKQPRSVAREIALLSLSQIKGKPDKLEAVELDELMLAAVRTLSSEIHDILEDAASEVSRAEEQLLRSETLAVNVKSARTMAADALELTRAAINRLGHVVELPEFLQLTRQHEVRNFALEILTTLRRRNDQIKEVIDGSLVDWQYHRLPRLDRDILRIAVAEILFLETPYKVAINEAVELAKRYSDEDGHRFINGVLRRVSDRLRAEDSLK.

The protein belongs to the NusB family.

Involved in transcription antitermination. Required for transcription of ribosomal RNA (rRNA) genes. Binds specifically to the boxA antiterminator sequence of the ribosomal RNA (rrn) operons. In Picosynechococcus sp. (strain ATCC 27264 / PCC 7002 / PR-6) (Agmenellum quadruplicatum), this protein is Transcription antitermination protein NusB.